The chain runs to 202 residues: Glycerol-3-phosphate acyltransferase (202 aa).

6 helical membrane passes run 2 to 22 (MIIV…GFVI), 54 to 74 (FLVT…PLWL), 85 to 105 (FFTN…YPVY), 120 to 140 (VVLG…FIVL), 141 to 161 (KIFK…VIGS), and 162 to 182 (LIIQ…ILII).

It belongs to the PlsY family. Probably interacts with PlsX.

It is found in the cell membrane. The catalysed reaction is an acyl phosphate + sn-glycerol 3-phosphate = a 1-acyl-sn-glycero-3-phosphate + phosphate. It participates in lipid metabolism; phospholipid metabolism. Its function is as follows. Catalyzes the transfer of an acyl group from acyl-phosphate (acyl-PO(4)) to glycerol-3-phosphate (G3P) to form lysophosphatidic acid (LPA). This enzyme utilizes acyl-phosphate as fatty acyl donor, but not acyl-CoA or acyl-ACP. In Staphylococcus aureus (strain USA300), this protein is Glycerol-3-phosphate acyltransferase.